A 353-amino-acid polypeptide reads, in one-letter code: Guanine nucleotide-binding protein alpha-1 subunit (353 aa).

A disordered region spans residues 1–26; sequence MGCGMSTEEKEGKARNEEIENQLKRD. The N-myristoyl glycine moiety is linked to residue G2. C3 carries the S-palmitoyl cysteine lipid modification. The segment covering 7 to 26 has biased composition (basic and acidic residues); the sequence is TEEKEGKARNEEIENQLKRD. Positions 32–353 constitute a G-alpha domain; it reads NEIKMLLLGA…QENLRLCGLI (322 aa). Positions 35 to 48 are G1 motif; the sequence is KMLLLGAGESGKST. The GTP site is built by E43, S44, G45, K46, S47, T48, D150, L175, T181, G203, N269, K270, D272, and A325. Residue S47 coordinates Mg(2+). The interval 173-181 is G2 motif; the sequence is DVLRSRVKT. Residue T181 coordinates Mg(2+). The G3 motif stretch occupies residues 196–205; that stretch reads YRMFDVGGQR. Residues 265–272 form a G4 motif region; the sequence is ILFLNKID. The G5 motif stretch occupies residues 323-328; it reads TCATDT.

It belongs to the G-alpha family. G(q) subfamily. In terms of assembly, g proteins are composed of 3 units; alpha, beta and gamma. The alpha chain contains the guanine nucleotide binding site. Mg(2+) is required as a cofactor.

Guanine nucleotide-binding proteins (G proteins) are involved as modulators or transducers in various transmembrane signaling systems. The protein is Guanine nucleotide-binding protein alpha-1 subunit (gna-1) of Neurospora crassa (strain ATCC 24698 / 74-OR23-1A / CBS 708.71 / DSM 1257 / FGSC 987).